Reading from the N-terminus, the 786-residue chain is Toll-like receptor 1 (786 aa).

An N-terminal signal peptide occupies residues 1–24 (MTSIFHFAIIFMLILQIRIQLSEE). Topologically, residues 25–580 (SEFLVDRSKN…HMSELSCNIT (556 aa)) are extracellular. Asn51 is a glycosylation site (N-linked (GlcNAc...) asparagine). LRR repeat units follow at residues 54 to 77 (QNYI…LIIS), 78 to 101 (HNRI…LDLS), 102 to 125 (HNKL…SFNA), 126 to 150 (FDAL…STTH), 151 to 175 (LEKS…GETY), 176 to 199 (GEKE…FPTN), 200 to 223 (KEFH…NIKC), 224 to 250 (VLED…SNLT), 251 to 278 (LNNI…YFSI), 279 to 308 (SNVK…HQVV), 309 to 337 (SDVF…SGTR), 338 to 361 (MVHM…NLLT), 362 to 388 (DTVF…KELS), 389 to 414 (KIAE…SYDE), 415 to 437 (KKGD…ILTD), 438 to 457 (TIFR…SNKI), 458 to 478 (KSIP…VAFN), 479 to 500 (SLTD…IDHN), and 501 to 524 (SVSH…AGDN). An intrachain disulfide couples Cys110 to Cys132. Asn137 and Asn163 each carry an N-linked (GlcNAc...) asparagine glycan. A disulfide bridge links Cys223 with Cys230. The segment at 313–316 (GFPQ) is interaction with bacterial lipopeptide. Asn330 carries N-linked (GlcNAc...) asparagine glycosylation. Cys343 and Cys368 are disulfide-bonded. The cysteines at positions 419 and 442 are disulfide-linked. Asn429 carries an N-linked (GlcNAc...) asparagine glycan. One can recognise an LRRCT domain in the interval 525 to 579 (PFQCTCELGEFVKNIDQVSSEVLEGWPDSYKCDYPESYRGTLLKDFHMSELSCNI). Asn578 carries an N-linked (GlcNAc...) asparagine glycan. Residues 581-601 (LLIVTIVATMLVLAVTVTSLC) form a helical membrane-spanning segment. The Cytoplasmic segment spans residues 602–786 (SYLDLPWYLR…NIKLTEQAKK (185 aa)). Residues 635 to 776 (LQFHAFISYS…LFWANLRAAI (142 aa)) form the TIR domain.

The protein belongs to the Toll-like receptor family. As to quaternary structure, interacts (via extracellular domain) with TLR2. TLR2 seems to exist in heterodimers with either TLR1 or TLR6 before stimulation by the ligand. The heterodimers form bigger oligomers in response to their corresponding ligands as well as further heterotypic associations with other receptors such as CD14 and/or CD36. The activation cluster TLR2:TLR1:CD14 forms in response to triacylated lipopeptides. Binds MYD88 (via TIR domain). Interacts with CNPY3. Interacts with neutrophil recruitment protein from Aedes aegypti saliva; the interaction probably promotes activation of canonical NF-kappa-B signaling in skin-resident macrophages and subsequent expression of neutrophil chemoattractants. Ubiquitous. Highly expressed in spleen, ovary, peripheral blood leukocytes, thymus and small intestine.

The protein localises to the cell membrane. It localises to the cytoplasmic vesicle. Its subcellular location is the phagosome membrane. It is found in the membrane raft. The protein resides in the golgi apparatus. Its function is as follows. Participates in the innate immune response to microbial agents. Specifically recognizes diacylated and triacylated lipopeptides. Cooperates with TLR2 to mediate the innate immune response to bacterial lipoproteins or lipopeptides. Forms the activation cluster TLR2:TLR1:CD14 in response to triacylated lipopeptides, this cluster triggers signaling from the cell surface and subsequently is targeted to the Golgi in a lipid-raft dependent pathway. Acts via MYD88 and TRAF6, leading to NF-kappa-B activation, cytokine secretion and the inflammatory response. In Homo sapiens (Human), this protein is Toll-like receptor 1 (TLR1).